The chain runs to 235 residues: Elongation factor Tu, chloroplastic (235 aa).

In terms of domain architecture, tr-type G spans 1–125 (KNMITGAAQM…EVDNYIPLPT (125 aa)). 47-50 (NKAD) serves as a coordination point for GTP.

It belongs to the TRAFAC class translation factor GTPase superfamily. Classic translation factor GTPase family. EF-Tu/EF-1A subfamily.

Its subcellular location is the plastid. It is found in the chloroplast. It carries out the reaction GTP + H2O = GDP + phosphate + H(+). Its function is as follows. GTP hydrolase that promotes the GTP-dependent binding of aminoacyl-tRNA to the A-site of ribosomes during protein biosynthesis. The chain is Elongation factor Tu, chloroplastic (tufA) from Bryopsis plumosa (Green alga).